The chain runs to 329 residues: Serine dehydratase-like (329 aa).

Position 1 is an N-acetylmethionine (M1). N6-(pyridoxal phosphate)lysine is present on K48.

Belongs to the serine/threonine dehydratase family. As to quaternary structure, monomer. Homodimer. The cofactor is pyridoxal 5'-phosphate. In terms of tissue distribution, expressed in lung cancer cell lines.

The enzyme catalyses L-serine = pyruvate + NH4(+). It catalyses the reaction L-threonine = 2-oxobutanoate + NH4(+). The catalysed reaction is L-glutamate = D-glutamate. Catalyzes the pyridoxal-phosphate-dependent dehydrative deamination of L-threonine and L-serine to ammonia and alpha-ketobutyrate and pyruvate, respectively. Also exhibits racemase activity towards L-glutamate and D-glutamate. The chain is Serine dehydratase-like (SDSL) from Homo sapiens (Human).